Reading from the N-terminus, the 1464-residue chain is Collagen alpha-1(III) chain (1464 aa).

The first 23 residues, 1 to 23 (MMSFVQSGTWFLLTLLHPTLILA), serve as a signal peptide directing secretion. A propeptide spans 24 to 154 (QQSNVDELGC…CPTGGQNYSP (131 aa)) (N-terminal propeptide). Residues 31 to 90 (LGCSHLGQSYESRDVWKPEPCQICVCDSGSVLCDDIICDEEPLDCPNPEIPFGECCAICP) form the VWFC domain. A disordered region spans residues 97–1195 (PVLPDGHGPQ…PGPPGAPGPC (1099 aa)). Residues 100 to 109 (PDGHGPQGPK) show a composition bias toward low complexity. A compositionally biased stretch (polar residues) spans 147 to 156 (TGGQNYSPQF). The nonhelical region (N-terminal) stretch occupies residues 155-169 (QFDSYDVKSGVGGMG). Residues 164–173 (GVGGMGGYPG) show a composition bias toward gly residues. Positions 170–1195 (GYPGPAGPPG…PGPPGAPGPC (1026 aa)) are triple-helical region. Residues 174 to 184 (PAGPPGPPGPP) are compositionally biased toward pro residues. Residues 186–198 (SSGHPGSPGSPGY) are compositionally biased toward low complexity. Residues 228 to 240 (KDGESGRPGRPGE) show a composition bias toward basic and acidic residues. Position 262 is a 5-hydroxylysine; alternate (Lys262). The O-linked (Gal...) hydroxylysine; alternate glycan is linked to Lys262. Positions 265 to 276 (RGFDGRNGEKGE) are enriched in basic and acidic residues. Lys283 bears the 5-hydroxylysine mark. Low complexity-rich tracts occupy residues 310-321 (PGLPGAAGARGN) and 354-379 (PAGS…AGAQ). Residues 389–398 (GSPGGKGEMG) are compositionally biased toward gly residues. Positions 399 to 412 (PAGIPGAPGLIGAR) are enriched in low complexity. The segment covering 527–548 (GTPGGPGIRGMPGSPGGPGNDG) has biased composition (gly residues). Over residues 606–615 (PAGKNGETGP) the composition is skewed to low complexity. Gly residues-rich tracts occupy residues 641 to 650 (GIPGTGGPPG) and 668 to 677 (GAPGGKGDSG). The segment covering 678–691 (APGERGPPGTAGIP) has biased composition (low complexity). The span at 692–708 (GARGGAGPPGPEGGKGP) shows a compositional bias: gly residues. Over residues 717–727 (ASGSPGLQGMP) the composition is skewed to low complexity. The span at 822 to 834 (AKGERGAPGEKGE) shows a compositional bias: basic and acidic residues. Lys859 carries the 5-hydroxylysine modification. Residues 863-879 (GSPGGPGTAGFPGGRGL) are compositionally biased toward gly residues. The span at 889–906 (PGPPGPSGAPGKDGPPGP) shows a compositional bias: pro residues. 2 stretches are compositionally biased toward low complexity: residues 907–934 (AGNS…KGPP) and 945–960 (PLGI…LAGP). Lys976 carries the 5-hydroxylysine modification. Positions 1045-1054 (PGHPGPPGPV) are enriched in pro residues. The segment covering 1068 to 1084 (PAGPSGAPGPAGARGAP) has biased composition (low complexity). A 5-hydroxylysine mark is found at Lys1093 and Lys1105. The segment covering 1120-1132 (PGAAGHQGAIGSP) has biased composition (low complexity). Residues 1180-1192 (PGQPGPPGPPGAP) show a composition bias toward pro residues. Residues 1220–1464 (DDPMDFKINT…GVDIGPVCFL (245 aa)) constitute a propeptide, C-terminal propeptide. In terms of domain architecture, Fibrillar collagen NC1 spans 1230-1464 (EEIMSSLKSV…GVDIGPVCFL (235 aa)). 3 disulfides stabilise this stretch: Cys1260-Cys1292, Cys1300-Cys1462, and Cys1370-Cys1415. Asp1278, Asn1280, Gln1281, Cys1283, and Asp1286 together coordinate Ca(2+).

This sequence belongs to the fibrillar collagen family. Trimers of identical alpha 1(III) chains. The chains are linked to each other by interchain disulfide bonds. Trimers are also cross-linked via hydroxylysines. Interacts with ADGRG1. Post-translationally, proline residues at the third position of the tripeptide repeating unit (G-X-Y) are hydroxylated in some or all of the chains. In terms of processing, O-linked glycan consists of a Glc-Gal disaccharide bound to the oxygen atom of a post-translationally added hydroxyl group. In terms of tissue distribution, expressed in embryonic brain, specifically in the meninges, pial basement membrane and blood vessels (at protein level).

The protein localises to the secreted. It is found in the extracellular space. The protein resides in the extracellular matrix. Functionally, collagen type III occurs in most soft connective tissues along with type I collagen. Involved in regulation of cortical development. Is the major ligand of ADGRG1 in the developing brain and binding to ADGRG1 inhibits neuronal migration and activates the RhoA pathway by coupling ADGRG1 to GNA13 and possibly GNA12. This chain is Collagen alpha-1(III) chain (Col3a1), found in Mus musculus (Mouse).